The following is a 62-amino-acid chain: Protein gp45.2 (62 aa).

Its function is as follows. May participate in replication-dependent transcriptional events during viral growth. In Escherichia coli (Bacteriophage T4), this protein is Protein gp45.2 (45.2).